Here is a 930-residue protein sequence, read N- to C-terminus: Bifunctional uridylyltransferase/uridylyl-removing enzyme (930 aa).

Residues 1 to 387 (MAPASEAGPA…IMGLFRRKKR (387 aa)) form a uridylyltransferase region. Residues 388–741 (LKPEYSLVNG…LDPDPDRDAT (354 aa)) are uridylyl-removing. The region spanning 504-626 (VDEHTIQCIS…VRSKKRLDLL (123 aa)) is the HD domain. 2 consecutive ACT domains span residues 742–818 (RACF…VVAR) and 852–927 (IIEV…GAER).

Belongs to the GlnD family. The cofactor is Mg(2+).

The catalysed reaction is [protein-PII]-L-tyrosine + UTP = [protein-PII]-uridylyl-L-tyrosine + diphosphate. It catalyses the reaction [protein-PII]-uridylyl-L-tyrosine + H2O = [protein-PII]-L-tyrosine + UMP + H(+). Its activity is regulated as follows. Uridylyltransferase (UTase) activity is inhibited by glutamine, while glutamine activates uridylyl-removing (UR) activity. Modifies, by uridylylation and deuridylylation, the PII regulatory proteins (GlnB and homologs), in response to the nitrogen status of the cell that GlnD senses through the glutamine level. Under low glutamine levels, catalyzes the conversion of the PII proteins and UTP to PII-UMP and PPi, while under higher glutamine levels, GlnD hydrolyzes PII-UMP to PII and UMP (deuridylylation). Thus, controls uridylylation state and activity of the PII proteins, and plays an important role in the regulation of nitrogen fixation and metabolism. This is Bifunctional uridylyltransferase/uridylyl-removing enzyme from Cereibacter sphaeroides (strain ATCC 17023 / DSM 158 / JCM 6121 / CCUG 31486 / LMG 2827 / NBRC 12203 / NCIMB 8253 / ATH 2.4.1.) (Rhodobacter sphaeroides).